The following is a 131-amino-acid chain: Large ribosomal subunit protein bL12 (131 aa).

This sequence belongs to the bacterial ribosomal protein bL12 family. As to quaternary structure, homodimer. Part of the ribosomal stalk of the 50S ribosomal subunit. Forms a multimeric L10(L12)X complex, where L10 forms an elongated spine to which 2 to 4 L12 dimers bind in a sequential fashion. Binds GTP-bound translation factors.

Its function is as follows. Forms part of the ribosomal stalk which helps the ribosome interact with GTP-bound translation factors. Is thus essential for accurate translation. This chain is Large ribosomal subunit protein bL12, found in Prochlorococcus marinus (strain MIT 9313).